Here is a 250-residue protein sequence, read N- to C-terminus: MAAVQLLAEEGADAAALSALAQRWGLCHDADAVLALVLTPQRLELRKLDEPKLGAIFVDFVGGTLAHRRRFGGGRGEAVAKAVGIKGGYLPDVVDATAGLGRDAFVLASLGCRVRMLERHPAVAALLDDGLQRGYADAEIGPWLRERLTLLHASSIEALATLTPRPEVVYLDPMFPHRQKSALVKKDMRVFQALVGADDDADALLAPARRLATKRVVVKRPDYAPPLAGVATPNATLTKSHRFDIYAPLA.

Residues 102–103, 118–119, 154–155, and Asp-172 contribute to the S-adenosyl-L-methionine site; these read RD, ER, and SS.

Belongs to the methyltransferase superfamily. RsmJ family.

It is found in the cytoplasm. It catalyses the reaction guanosine(1516) in 16S rRNA + S-adenosyl-L-methionine = N(2)-methylguanosine(1516) in 16S rRNA + S-adenosyl-L-homocysteine + H(+). Functionally, specifically methylates the guanosine in position 1516 of 16S rRNA. In Edwardsiella ictaluri (strain 93-146), this protein is Ribosomal RNA small subunit methyltransferase J.